Consider the following 433-residue polypeptide: 23S rRNA (uracil(1939)-C(5))-methyltransferase RlmD (433 aa).

In terms of domain architecture, TRAM spans 10-68 (RTTTRQIITVSVNDLDSFGQGVARHNGKTLFIPGLLPQENAEVTVTEDKKQYARAKVVR). 2 interaction with RNA regions span residues 23–40 (DLDSFGQGVARHNGKTLF) and 58–63 (KKQYAR). [4Fe-4S] cluster contacts are provided by cysteine 81, cysteine 87, cysteine 90, and cysteine 162. S-adenosyl-L-methionine is bound by residues glutamine 265, phenylalanine 294, asparagine 299, glutamate 315, asparagine 342, and aspartate 363. Catalysis depends on cysteine 389, which acts as the Nucleophile.

It belongs to the class I-like SAM-binding methyltransferase superfamily. RNA M5U methyltransferase family. RlmD subfamily.

It carries out the reaction uridine(1939) in 23S rRNA + S-adenosyl-L-methionine = 5-methyluridine(1939) in 23S rRNA + S-adenosyl-L-homocysteine + H(+). In terms of biological role, catalyzes the formation of 5-methyl-uridine at position 1939 (m5U1939) in 23S rRNA. The sequence is that of 23S rRNA (uracil(1939)-C(5))-methyltransferase RlmD from Escherichia coli (strain K12).